A 287-amino-acid polypeptide reads, in one-letter code: Pyridoxal kinase PdxY (287 aa).

Substrate is bound by residues serine 9 and 44–45 (TQ). Residues aspartate 111, glutamate 147, and lysine 180 each coordinate ATP. Aspartate 221 lines the substrate pocket.

This sequence belongs to the pyridoxine kinase family. PdxY subfamily. As to quaternary structure, homodimer. Mg(2+) is required as a cofactor.

The enzyme catalyses pyridoxal + ATP = pyridoxal 5'-phosphate + ADP + H(+). The protein operates within cofactor metabolism; pyridoxal 5'-phosphate salvage; pyridoxal 5'-phosphate from pyridoxal: step 1/1. Its function is as follows. Pyridoxal kinase involved in the salvage pathway of pyridoxal 5'-phosphate (PLP). Catalyzes the phosphorylation of pyridoxal to PLP. In Paraburkholderia phymatum (strain DSM 17167 / CIP 108236 / LMG 21445 / STM815) (Burkholderia phymatum), this protein is Pyridoxal kinase PdxY.